We begin with the raw amino-acid sequence, 615 residues long: Medium-chain acyl-CoA ligase ACSF2, mitochondrial (615 aa).

The N-terminal 42 residues, 1 to 42 (MAVYVGMLRVARLCARSPRVLGARVGLSRVWQEARLWGVRPL), are a transit peptide targeting the mitochondrion. K179 bears the N6-acetyllysine mark. N6-acetyllysine; alternate is present on K182. At K182 the chain carries N6-succinyllysine; alternate. K199 carries the N6-acetyllysine modification. 263–271 (TSGTTGSPK) contributes to the ATP binding site. K340 and K398 each carry N6-acetyllysine. K478 is modified (N6-succinyllysine). D493 and R508 together coordinate ATP. K510 is modified (N6-acetyllysine). An N6-acetyllysine; alternate mark is found at K544 and K570. K544 and K570 each carry N6-succinyllysine; alternate. K599 is a binding site for ATP. N6-succinyllysine is present on K599.

Belongs to the ATP-dependent AMP-binding enzyme family.

It is found in the mitochondrion. The enzyme catalyses a medium-chain fatty acid + ATP + CoA = a medium-chain fatty acyl-CoA + AMP + diphosphate. The catalysed reaction is octanoate + ATP + CoA = octanoyl-CoA + AMP + diphosphate. Its function is as follows. Acyl-CoA synthases catalyze the initial reaction in fatty acid metabolism, by forming a thioester with CoA. Has some preference toward medium-chain substrates. Plays a role in adipocyte differentiation. In Bos taurus (Bovine), this protein is Medium-chain acyl-CoA ligase ACSF2, mitochondrial.